The chain runs to 1315 residues: Serine-aspartate repeat-containing protein D (1315 aa).

The N-terminal stretch at 1–35 (MLNRENKTAITRKGMVSNRLNKFSIRKYTVGTASI) is a signal peptide. The short motif at 23-34 (FSIRKYTVGTAS) is the YSIRK-G/S signaling motif element. Positions 36-568 (LVGTTLIFGL…NNQSGGAGQE (533 aa)) are ligand binding A region. The interval 54–185 (ESTNKELNEA…NKKVDAKTES (132 aa)) is disordered. 2 stretches are compositionally biased toward polar residues: residues 62-71 (EATTSASDNQ) and 94-108 (EMVSSQGNETTSNGN). The span at 130 to 145 (KSDEQASPKSTNEDLN) shows a compositional bias: basic and acidic residues. Composition is skewed to polar residues over residues 146–155 (TKQTISNQEA) and 163–173 (NKSVVNVQPTN). The segment covering 174–183 (EENKKVDAKT) has biased composition (basic and acidic residues). CNA-B domains are found at residues 569-680 (VYKI…IYKP), 681-791 (KYNL…YKTP), 792-901 (KYNL…FYKP), 902-1012 (TYNL…YKTP), and 1013-1123 (KYSL…EEET). Disordered regions lie at residues 857 to 883 (ETPSGYTPTQVGSGTDEGIDSNGTSTT), 972 to 992 (YTPTSVTSGNDTEKDSNGLTT), and 1078 to 1291 (EKPA…SNNA). Polar residues-rich tracts occupy residues 860 to 869 (SGYTPTQVGS) and 972 to 981 (YTPTSVTSGN). Composition is skewed to acidic residues over residues 1091–1101 (TEDDKDADGGE), 1118–1134 (YYEEETSDSDSDSDSDS), 1142–1164 (SDSDSDSDSDSDSDSDSDSDSDS), and 1172–1254 (SDSD…DSDS). Positions 1278–1282 (LPETG) match the LPXTG sorting signal motif. At threonine 1281 the chain carries Pentaglycyl murein peptidoglycan amidated threonine. The propeptide at 1282–1315 (GNENSGSNNATLFGGLFAALGSLLLFGRRKKQNK) is removed by sortase.

Belongs to the serine-aspartate repeat-containing protein (SDr) family. As to quaternary structure, interacts with host DSG1; this interaction increases S.aureus adherence to keratinocytes. Anchored to the cell wall by sortase A.

Its subcellular location is the secreted. It is found in the cell wall. Its function is as follows. Cell surface-associated calcium-binding protein which plays an important role in adhesion and pathogenesis. Mediates interactions with components of the extracellular matrix such as host DSG1 to promote bacterial adhesion to host cells. Contributes to the resistance to killing by innate immune components such as neutrophils present in blood and thus attenuates bacterial clearance. This chain is Serine-aspartate repeat-containing protein D (sdrD), found in Staphylococcus aureus (strain Newman).